Consider the following 576-residue polypeptide: Boron transporter 1 (576 aa).

Over 1 to 84 (MSNESTRVTV…SDWVDAFNYR (84 aa)) the chain is Cytoplasmic. A disordered region spans residues 19–48 (ECAQALERTNDELDRESSVSESRSDEESHE). Positions 26–48 (RTNDELDRESSVSESRSDEESHE) are enriched in basic and acidic residues. Residues 85–105 (VIPSIVDTYFNNLLPAIAFAQ) form a helical membrane-spanning segment. The Extracellular segment spans residues 106–116 (DMFDRTDNSYG). Residues 117–134 (VNEVLLSSAMAGIVFGVL) traverse the membrane as a helical segment. The Cytoplasmic segment spans residues 135-140 (GGQPLC). The chain crosses the membrane as a helical span at residues 141–160 (IVGVTGPISIFNYTVYEIIK). The Extracellular segment spans residues 161–165 (PLNTS). A helical membrane pass occupies residues 166-186 (YFGFMFWICMWSMIFHLVLAF). Residues 187 to 192 (TNAVCL) are Cytoplasmic-facing. The chain crosses the membrane as a helical span at residues 193–213 (LQYVTTFPCDIFGLFINVVYI). The Extracellular segment spans residues 214-235 (QKGIQILTRQFSAKSGEKSVQD). A helical transmembrane segment spans residues 236–256 (GFASVVVALVMTAFGLFFKLF). At 257 to 274 (HYYPLFSHRIRTFISDYS) the chain is on the cytoplasmic side. The chain crosses the membrane as a helical span at residues 275–295 (TALSVLFWSSFTHFGGYLHDV). Residues 296–329 (KFKKLPITKAFFPTSKVNRPQNTWLAYEPIPVKD) lie on the Extracellular side of the membrane. The chain crosses the membrane as a helical span at residues 330–350 (VFIALPFGIFLTILFYFDHNV). Residues 351–373 (SSLMAQRHQYKLKKPSSFHYDFA) are Cytoplasmic-facing. Residues 374 to 394 (LLGLTTCISGVLGIPAPNGLI) form a helical membrane-spanning segment. Residues 395–438 (PQAPLHTETLLVRDSNQKVISCVEQRFTNTFQGLMILGTMTRPL) lie on the Extracellular side of the membrane. The chain crosses the membrane as a helical span at residues 439 to 459 (LVCLGEIPQAVLSGLFFIMGI). Over 460–495 (NGLMTNSIIQRLVFLFSDPNRRDNTSPLMKVSKKSM) the chain is Cytoplasmic. Residues 496–516 (LIFLSFSLTGFAGEFAITNTI) traverse the membrane as a helical segment. Residues 517-518 (AA) lie on the Extracellular side of the membrane. A helical membrane pass occupies residues 519 to 539 (IGFPLVLLLSVLVSFSFAYIF). The Cytoplasmic portion of the chain corresponds to 540–576 (PTEELKILDTNVAQKFTIKNLLLENIRDAKFCDKHED).

This sequence belongs to the anion exchanger (TC 2.A.31) family.

Its subcellular location is the cell membrane. It is found in the vacuole membrane. Functionally, functions in boric acid/borate export across the plasma membrane, and thereby protects yeast cells from boron toxicity. Involved in the trafficking of proteins to the vacuole. This chain is Boron transporter 1 (BOR1), found in Saccharomyces cerevisiae (strain ATCC 204508 / S288c) (Baker's yeast).